The chain runs to 1220 residues: DNA-directed RNA polymerase subunit beta' (1220 aa).

Cys61, Cys63, Cys76, and Cys79 together coordinate Zn(2+). 3 residues coordinate Mg(2+): Asp450, Asp452, and Asp454. Positions 1197–1220 are disordered; that stretch reads QPESESEEASDIPKLDDVAKTFDN. Basic and acidic residues predominate over residues 1207-1220; the sequence is DIPKLDDVAKTFDN.

The protein belongs to the RNA polymerase beta' chain family. As to quaternary structure, the RNAP catalytic core consists of 2 alpha, 1 beta, 1 beta' and 1 omega subunit. When a sigma factor is associated with the core the holoenzyme is formed, which can initiate transcription. Mg(2+) serves as cofactor. It depends on Zn(2+) as a cofactor.

It carries out the reaction RNA(n) + a ribonucleoside 5'-triphosphate = RNA(n+1) + diphosphate. Its function is as follows. DNA-dependent RNA polymerase catalyzes the transcription of DNA into RNA using the four ribonucleoside triphosphates as substrates. This is DNA-directed RNA polymerase subunit beta' from Leuconostoc mesenteroides subsp. mesenteroides (strain ATCC 8293 / DSM 20343 / BCRC 11652 / CCM 1803 / JCM 6124 / NCDO 523 / NBRC 100496 / NCIMB 8023 / NCTC 12954 / NRRL B-1118 / 37Y).